Consider the following 143-residue polypeptide: Transcriptional regulator MraZ (143 aa).

SpoVT-AbrB domains lie at 5–47 (EYLH…PLDE) and 76–119 (ATEC…SQAL).

Belongs to the MraZ family. In terms of assembly, forms oligomers.

The protein localises to the cytoplasm. It is found in the nucleoid. This chain is Transcriptional regulator MraZ, found in Desulfitobacterium hafniense (strain DSM 10664 / DCB-2).